Here is a 567-residue protein sequence, read N- to C-terminus: ETHYLENE INSENSITIVE 3-like 3 protein (567 aa).

The stretch at 24-44 forms a coiled coil; that stretch reads NVAEIDVSDEEIDADDLERRM. 2 disordered regions span residues 55 to 81 and 286 to 393; these read KERQ…AQRK and IQQP…RNIL. Basic and acidic residues predominate over residues 69 to 79; it reads ETPKKISDQAQ. Residues 162-288 mediate DNA binding; it reads SQFVLQDLQD…LNQEESLIQQ (127 aa). The segment covering 286–299 has biased composition (polar residues); that stretch reads IQQPSSDNGNSNVT. The span at 300–312 shows a compositional bias: basic and acidic residues; it reads ETHRRGNNADRRK. Residues 363–372 are compositionally biased toward basic residues; the sequence is KHRRRKRPRI.

This sequence belongs to the EIN3 family. As to quaternary structure, interacts with MYB72.

It localises to the nucleus. Functionally, probable transcription factor that may be involved in the ethylene response pathway. The polypeptide is ETHYLENE INSENSITIVE 3-like 3 protein (EIL3) (Arabidopsis thaliana (Mouse-ear cress)).